A 211-amino-acid chain; its full sequence is Probable oligoribonuclease (211 aa).

The region spanning 38 to 202 (IVWMDLEMTG…DDIRESIKEL (165 aa)) is the Exonuclease domain. The active site involves tyrosine 159.

The protein belongs to the oligoribonuclease family.

3'-to-5' exoribonuclease specific for small oligoribonucleotides. The polypeptide is Probable oligoribonuclease (Drosophila melanogaster (Fruit fly)).